Consider the following 120-residue polypeptide: Large ribosomal subunit protein bL19 (120 aa).

The protein belongs to the bacterial ribosomal protein bL19 family.

In terms of biological role, this protein is located at the 30S-50S ribosomal subunit interface and may play a role in the structure and function of the aminoacyl-tRNA binding site. The sequence is that of Large ribosomal subunit protein bL19 from Trichormus variabilis (strain ATCC 29413 / PCC 7937) (Anabaena variabilis).